Consider the following 185-residue polypeptide: Ribosome-recycling factor (185 aa).

Belongs to the RRF family.

It is found in the cytoplasm. Functionally, responsible for the release of ribosomes from messenger RNA at the termination of protein biosynthesis. May increase the efficiency of translation by recycling ribosomes from one round of translation to another. The protein is Ribosome-recycling factor of Vesicomyosocius okutanii subsp. Calyptogena okutanii (strain HA).